The sequence spans 151 residues: UPF0756 membrane protein LBA0919 (151 aa).

The next 4 membrane-spanning stretches (helical) occupy residues 4 to 24, 52 to 72, 78 to 98, and 115 to 135; these read WLFL…SLII, WGVT…QIGF, TFKT…AVLS, and LVLG…GPVI.

Belongs to the UPF0756 family.

Its subcellular location is the cell membrane. The protein is UPF0756 membrane protein LBA0919 of Lactobacillus acidophilus (strain ATCC 700396 / NCK56 / N2 / NCFM).